Consider the following 300-residue polypeptide: ATP synthase gamma chain (300 aa).

The protein belongs to the ATPase gamma chain family. F-type ATPases have 2 components, CF(1) - the catalytic core - and CF(0) - the membrane proton channel. CF(1) has five subunits: alpha(3), beta(3), gamma(1), delta(1), epsilon(1). CF(0) has three main subunits: a, b and c.

It is found in the cell membrane. Its function is as follows. Produces ATP from ADP in the presence of a proton gradient across the membrane. The gamma chain is believed to be important in regulating ATPase activity and the flow of protons through the CF(0) complex. The polypeptide is ATP synthase gamma chain (Enterococcus hirae (strain ATCC 9790 / DSM 20160 / JCM 8729 / LMG 6399 / NBRC 3181 / NCIMB 6459 / NCDO 1258 / NCTC 12367 / WDCM 00089 / R)).